We begin with the raw amino-acid sequence, 403 residues long: Na(+)-translocating NADH-quinone reductase subunit B (403 aa).

Transmembrane regions (helical) follow at residues 56–76 (MMII…YNVG), 121–141 (AYFL…EVLF), 164–184 (LPPS…VVLG), 225–245 (GFAG…NILG), 260–280 (GSMG…LLLT), 287–307 (IVAG…AIGS), 312–332 (MFAM…GMIF), 348–368 (WLFG…NPAF), and 371–391 (GMML…HFVV). FMN phosphoryl threonine is present on threonine 230.

Belongs to the NqrB/RnfD family. As to quaternary structure, composed of six subunits; NqrA, NqrB, NqrC, NqrD, NqrE and NqrF. The cofactor is FMN.

Its subcellular location is the cell inner membrane. The catalysed reaction is a ubiquinone + n Na(+)(in) + NADH + H(+) = a ubiquinol + n Na(+)(out) + NAD(+). Its function is as follows. NQR complex catalyzes the reduction of ubiquinone-1 to ubiquinol by two successive reactions, coupled with the transport of Na(+) ions from the cytoplasm to the periplasm. NqrA to NqrE are probably involved in the second step, the conversion of ubisemiquinone to ubiquinol. This chain is Na(+)-translocating NADH-quinone reductase subunit B, found in Pseudomonas aeruginosa (strain LESB58).